Here is a 104-residue protein sequence, read N- to C-terminus: Iron-sulfur cluster assembly protein CyaY (104 aa).

Belongs to the frataxin family.

Involved in iron-sulfur (Fe-S) cluster assembly. May act as a regulator of Fe-S biogenesis. In Aliivibrio fischeri (strain ATCC 700601 / ES114) (Vibrio fischeri), this protein is Iron-sulfur cluster assembly protein CyaY.